A 132-amino-acid chain; its full sequence is Large ribosomal subunit protein bL17 (132 aa).

It belongs to the bacterial ribosomal protein bL17 family. In terms of assembly, part of the 50S ribosomal subunit. Contacts protein L32.

In Marinobacter nauticus (strain ATCC 700491 / DSM 11845 / VT8) (Marinobacter aquaeolei), this protein is Large ribosomal subunit protein bL17.